We begin with the raw amino-acid sequence, 190 residues long: Potassium-transporting ATPase KdpC subunit (190 aa).

A helical membrane pass occupies residues 13-33; the sequence is VGFLLLTLVCGVVYPGIVTII.

Belongs to the KdpC family. In terms of assembly, the system is composed of three essential subunits: KdpA, KdpB and KdpC.

The protein resides in the cell membrane. Functionally, part of the high-affinity ATP-driven potassium transport (or Kdp) system, which catalyzes the hydrolysis of ATP coupled with the electrogenic transport of potassium into the cytoplasm. This subunit acts as a catalytic chaperone that increases the ATP-binding affinity of the ATP-hydrolyzing subunit KdpB by the formation of a transient KdpB/KdpC/ATP ternary complex. The polypeptide is Potassium-transporting ATPase KdpC subunit (Listeria welshimeri serovar 6b (strain ATCC 35897 / DSM 20650 / CCUG 15529 / CIP 8149 / NCTC 11857 / SLCC 5334 / V8)).